Here is a 735-residue protein sequence, read N- to C-terminus: Photosystem I P700 chlorophyll a apoprotein A2 (735 aa).

8 helical membrane passes run 47–70 (IFASHFGQLAIIFLWTSGNLFHVA), 136–159 (LFTGSVFLALVSAVFLFAGWLHLQ), 176–200 (LNHHLSGLFGVSSLAWTGHLVHVAI), 274–292 (MAHHHLAIAVIFIVAGHMY), 331–354 (LHFQLGLALASVGTITSMIAQHIY), 370–396 (AALYTHHQYIAGFIMCGAFAHGAIFFI), 418–440 (AIISHLSWVTLFLGFHTLGLYVH), and 518–536 (FLVHHAIALGLHTTTLILV). Residues Cys560 and Cys569 each coordinate [4Fe-4S] cluster. 2 helical membrane passes run 576-597 (AFYLAVFWMLNTIGWVTFYFHW) and 644-666 (LSVWAFCFLFGHLIYATGFMFLI). Residues His655, Met663, and Tyr671 each contribute to the chlorophyll a site. A phylloquinone-binding site is contributed by Trp672. The helical transmembrane segment at 708–728 (LVGLVHFSVGYIFTYAAFLIA) threads the bilayer.

Belongs to the PsaA/PsaB family. As to quaternary structure, the PsaA/B heterodimer binds the P700 chlorophyll special pair and subsequent electron acceptors. PSI consists of a core antenna complex that captures photons, and an electron transfer chain that converts photonic excitation into a charge separation. The eukaryotic PSI reaction center is composed of at least 11 subunits. Requires P700 is a chlorophyll a/chlorophyll a' dimer, A0 is one or more chlorophyll a, A1 is one or both phylloquinones and FX is a shared 4Fe-4S iron-sulfur center. as cofactor.

It localises to the plastid. Its subcellular location is the chloroplast thylakoid membrane. The enzyme catalyses reduced [plastocyanin] + hnu + oxidized [2Fe-2S]-[ferredoxin] = oxidized [plastocyanin] + reduced [2Fe-2S]-[ferredoxin]. PsaA and PsaB bind P700, the primary electron donor of photosystem I (PSI), as well as the electron acceptors A0, A1 and FX. PSI is a plastocyanin/cytochrome c6-ferredoxin oxidoreductase, converting photonic excitation into a charge separation, which transfers an electron from the donor P700 chlorophyll pair to the spectroscopically characterized acceptors A0, A1, FX, FA and FB in turn. Oxidized P700 is reduced on the lumenal side of the thylakoid membrane by plastocyanin or cytochrome c6. The sequence is that of Photosystem I P700 chlorophyll a apoprotein A2 from Chlamydomonas moewusii (Chlamydomonas eugametos).